A 503-amino-acid chain; its full sequence is Beta-amylase Tri a 17 (503 aa).

The substrate site is built by Asp-51, His-91, and Asp-99. Glu-184 (proton donor) is an active-site residue. Substrate is bound by residues Lys-293, His-298, and Thr-340. Glu-378 functions as the Proton acceptor in the catalytic mechanism. Substrate-binding positions include 379 to 380 (NA) and Arg-418.

Belongs to the glycosyl hydrolase 14 family.

The catalysed reaction is Hydrolysis of (1-&gt;4)-alpha-D-glucosidic linkages in polysaccharides so as to remove successive maltose units from the non-reducing ends of the chains.. This Triticum aestivum (Wheat) protein is Beta-amylase Tri a 17 (BMY1).